The following is an 854-amino-acid chain: Alkaline phosphatase-like protein PglZ (854 aa).

It belongs to the alkaline phosphatase superfamily.

In terms of biological role, BREX systems (bacteriophage exclusion) provide immunity against bacteriophage. A core protein of a type 1 BREX system. This system allows phage adsorption but prevents phage DNA replication, without degradation of the phage DNA. Methylation of bacterial DNA by PglX probably guides self/non-self discrimination. When the brxA-brxB-brxC-pglX and pglZ-brxL operons are transformed into a susceptible B.subtilis strain (BEST7003) they confer resistance to bacteriophages SPbeta, SP16, Zeta, phi3T and SP02 and partial protection to phages SP01 and SP82G (these include lytic and temperate phage). They do not protect against phages phi105, rho10 or rho14. Additionally confers a very slight reduction in efficiency of plasmid transformation. The sequence is that of Alkaline phosphatase-like protein PglZ from Bacillus cereus (strain H3081.97).